The sequence spans 249 residues: Type III pantothenate kinase (249 aa).

6 to 13 (DCGNSFIK) serves as a coordination point for ATP. Residues Tyr93 and 100–103 (GLDR) each bind substrate. The active-site Proton acceptor is the Asp102. Asp122 is a binding site for K(+). Residue Thr125 participates in ATP binding. Residue Thr181 participates in substrate binding.

It belongs to the type III pantothenate kinase family. In terms of assembly, homodimer. NH4(+) serves as cofactor. The cofactor is K(+).

It is found in the cytoplasm. The catalysed reaction is (R)-pantothenate + ATP = (R)-4'-phosphopantothenate + ADP + H(+). The protein operates within cofactor biosynthesis; coenzyme A biosynthesis; CoA from (R)-pantothenate: step 1/5. In terms of biological role, catalyzes the phosphorylation of pantothenate (Pan), the first step in CoA biosynthesis. This chain is Type III pantothenate kinase, found in Pseudomonas syringae pv. syringae (strain B728a).